A 1106-amino-acid polypeptide reads, in one-letter code: Carbamoyl phosphate synthase large chain (1106 aa).

The segment at 1–401 (MPKRNDLNKV…AFLKALRSLE (401 aa)) is carboxyphosphate synthetic domain. Residues Arg-129, Arg-169, Gly-175, Gly-176, Arg-208, Val-210, Glu-215, Gly-241, Val-242, His-243, Gln-284, and Glu-298 each coordinate ATP. One can recognise an ATP-grasp 1 domain in the interval 133 to 327 (KTTMNDIGEP…IARVASKIAI (195 aa)). Mg(2+)-binding residues include Gln-284, Glu-298, and Asn-300. 3 residues coordinate Mn(2+): Gln-284, Glu-298, and Asn-300. The interval 402 to 577 (IDLDDLHQSI…YSAYNEENEA (176 aa)) is oligomerization domain. Residues 578–964 (IPPSEPTHDK…ALYKAMLASG (387 aa)) form a carbamoyl phosphate synthetic domain region. An ATP-grasp 2 domain is found at 706–896 (DQLLNKLGID…MVKIATKAMM (191 aa)). Residues Arg-742, Gln-781, Leu-783, Glu-787, Gly-812, Val-813, His-814, Ser-815, Gln-855, and Glu-867 each coordinate ATP. Residues Gln-855, Glu-867, and Asn-869 each contribute to the Mg(2+) site. 3 residues coordinate Mn(2+): Gln-855, Glu-867, and Asn-869. The 142-residue stretch at 965 to 1106 (FSINLNGGVL…LQDYLKELSN (142 aa)) folds into the MGS-like domain. Residues 965-1106 (FSINLNGGVL…LQDYLKELSN (142 aa)) are allosteric domain.

This sequence belongs to the CarB family. In terms of assembly, composed of two chains; the small (or glutamine) chain promotes the hydrolysis of glutamine to ammonia, which is used by the large (or ammonia) chain to synthesize carbamoyl phosphate. Tetramer of heterodimers (alpha,beta)4. It depends on Mg(2+) as a cofactor. Requires Mn(2+) as cofactor.

It carries out the reaction hydrogencarbonate + L-glutamine + 2 ATP + H2O = carbamoyl phosphate + L-glutamate + 2 ADP + phosphate + 2 H(+). It catalyses the reaction hydrogencarbonate + NH4(+) + 2 ATP = carbamoyl phosphate + 2 ADP + phosphate + 2 H(+). It participates in amino-acid biosynthesis; L-arginine biosynthesis; carbamoyl phosphate from bicarbonate: step 1/1. The protein operates within pyrimidine metabolism; UMP biosynthesis via de novo pathway; (S)-dihydroorotate from bicarbonate: step 1/3. In terms of biological role, large subunit of the glutamine-dependent carbamoyl phosphate synthetase (CPSase). CPSase catalyzes the formation of carbamoyl phosphate from the ammonia moiety of glutamine, carbonate, and phosphate donated by ATP, constituting the first step of 2 biosynthetic pathways, one leading to arginine and/or urea and the other to pyrimidine nucleotides. The large subunit (synthetase) binds the substrates ammonia (free or transferred from glutamine from the small subunit), hydrogencarbonate and ATP and carries out an ATP-coupled ligase reaction, activating hydrogencarbonate by forming carboxy phosphate which reacts with ammonia to form carbamoyl phosphate. The sequence is that of Carbamoyl phosphate synthase large chain from Natranaerobius thermophilus (strain ATCC BAA-1301 / DSM 18059 / JW/NM-WN-LF).